The sequence spans 117 residues: Peptidyl-tRNA hydrolase (117 aa).

Belongs to the PTH2 family.

The protein resides in the cytoplasm. The enzyme catalyses an N-acyl-L-alpha-aminoacyl-tRNA + H2O = an N-acyl-L-amino acid + a tRNA + H(+). In terms of biological role, the natural substrate for this enzyme may be peptidyl-tRNAs which drop off the ribosome during protein synthesis. The chain is Peptidyl-tRNA hydrolase from Thermoplasma volcanium (strain ATCC 51530 / DSM 4299 / JCM 9571 / NBRC 15438 / GSS1).